The following is a 183-amino-acid chain: Endoribonuclease AbiQ (183 aa).

Belongs to the ToxN/AbiQ toxin family. Forms a triangular heterohexamer with a single 35-nt-long repeat of RNA antitoxin AntiQ.

It localises to the cytoplasm. In terms of biological role, toxic component of a type III toxin-antitoxin (TA) system. An endoribonuclease that is probably sequence-specific. It is neutralized by its cognate antitoxin RNA AntiQ, which has 2.8 35 nucleotide-long repeats. Cannot be cloned in L.lactis subsp. cremoris strain NZ9000 in the absence of the antitoxin gene; expression in strain NZ9000 even in the presence of antiQ inhibits growth in a bacteriostatic fashion. Confers resistance to 936 and c2 phages but not P335 phages in L.lactis, causes an abortive infection (Abi phenotype). Viral DNA is replicated but not cleaved from its concatemeric form, while the viral major structural protein is produced normally in the presence of this protein. Operon expression in E.coli confers resistance to 3 phages of the Myoviridae family (T4, RB69 and phage 2) and 1 of the Siphoviridae family (T5), but not other tested phages (T1, T3, lambda vir, HK97, Mu and pilH alpha). The presence of this operon in L.lactis subsp. lactis strain IL1403 during phage P008 infection alters the viral transcription profiles. The sequence is that of Endoribonuclease AbiQ from Lactococcus lactis subsp. lactis (Streptococcus lactis).